We begin with the raw amino-acid sequence, 136 residues long: Phosphoribosyl-AMP cyclohydrolase (136 aa).

Asp-92 serves as a coordination point for Mg(2+). Residue Cys-93 participates in Zn(2+) binding. Mg(2+) contacts are provided by Asp-94 and Asp-96. Zn(2+) is bound by residues Cys-109 and Cys-116.

Belongs to the PRA-CH family. As to quaternary structure, homodimer. It depends on Mg(2+) as a cofactor. Requires Zn(2+) as cofactor.

It localises to the cytoplasm. The enzyme catalyses 1-(5-phospho-beta-D-ribosyl)-5'-AMP + H2O = 1-(5-phospho-beta-D-ribosyl)-5-[(5-phospho-beta-D-ribosylamino)methylideneamino]imidazole-4-carboxamide. It participates in amino-acid biosynthesis; L-histidine biosynthesis; L-histidine from 5-phospho-alpha-D-ribose 1-diphosphate: step 3/9. Its activity is regulated as follows. Reversibly inhibited by EDTA and free zinc ions. Enzyme is inactivated by dialysis against 1,10-phenanthroline, which is a zinc specific chelator. Catalyzes the hydrolysis of the adenine ring of phosphoribosyl-AMP. This chain is Phosphoribosyl-AMP cyclohydrolase, found in Methanococcus vannielii.